The primary structure comprises 33 residues: Ice-structuring protein SS-3 (33 aa).

It belongs to the type-I AFP family.

In terms of biological role, antifreeze proteins lower the blood freezing point. The polypeptide is Ice-structuring protein SS-3 (Myoxocephalus scorpius (Shorthorn sculpin)).